A 581-amino-acid chain; its full sequence is NADH-quinone oxidoreductase subunit C/D (581 aa).

The tract at residues 1–172 (MSAFELVTEL…PLFNMTASLF (172 aa)) is NADH dehydrogenase I subunit C. The segment at 196-581 (ELMILNYGPH…IDYVMSDVDR (386 aa)) is NADH dehydrogenase I subunit D.

It in the N-terminal section; belongs to the complex I 30 kDa subunit family. This sequence in the C-terminal section; belongs to the complex I 49 kDa subunit family. In terms of assembly, NDH-1 is composed of 13 different subunits. Subunits NuoB, CD, E, F, and G constitute the peripheral sector of the complex.

The protein localises to the cell inner membrane. The enzyme catalyses a quinone + NADH + 5 H(+)(in) = a quinol + NAD(+) + 4 H(+)(out). Functionally, NDH-1 shuttles electrons from NADH, via FMN and iron-sulfur (Fe-S) centers, to quinones in the respiratory chain. The immediate electron acceptor for the enzyme in this species is believed to be ubiquinone. Couples the redox reaction to proton translocation (for every two electrons transferred, four hydrogen ions are translocated across the cytoplasmic membrane), and thus conserves the redox energy in a proton gradient. The chain is NADH-quinone oxidoreductase subunit C/D from Rhodopseudomonas palustris (strain ATCC BAA-98 / CGA009).